The following is a 137-amino-acid chain: Endoribonuclease YbeY (137 aa).

3 residues coordinate Zn(2+): His105, His109, and Asp115.

The protein belongs to the endoribonuclease YbeY family. It depends on Zn(2+) as a cofactor.

Its subcellular location is the cytoplasm. Its function is as follows. Single strand-specific metallo-endoribonuclease involved in late-stage 70S ribosome quality control and in maturation of the 3' terminus of the 16S rRNA. The protein is Endoribonuclease YbeY of Chlorobium luteolum (strain DSM 273 / BCRC 81028 / 2530) (Pelodictyon luteolum).